We begin with the raw amino-acid sequence, 327 residues long: Porphobilinogen deaminase (327 aa).

Cysteine 251 carries the S-(dipyrrolylmethanemethyl)cysteine modification.

It belongs to the HMBS family. Dipyrromethane serves as cofactor.

The enzyme catalyses 4 porphobilinogen + H2O = hydroxymethylbilane + 4 NH4(+). It functions in the pathway porphyrin-containing compound metabolism; protoporphyrin-IX biosynthesis; coproporphyrinogen-III from 5-aminolevulinate: step 2/4. Its function is as follows. Catalyzes the tetrapolymerization of the monopyrrole porphobilinogen (PBG) into the hydroxymethylbilane pre-uroporphyrinogen in several discrete steps. This chain is Porphobilinogen deaminase (HEM3), found in Saccharomyces cerevisiae (strain ATCC 204508 / S288c) (Baker's yeast).